Reading from the N-terminus, the 277-residue chain is Diaminopimelate epimerase (277 aa).

Substrate is bound by residues N11 and N65. Residue C74 is the Proton donor of the active site. Substrate is bound by residues 75–76 (GN), N180, and 198–199 (ER). C208 acts as the Proton acceptor in catalysis. Residue 209–210 (GT) coordinates substrate.

The protein belongs to the diaminopimelate epimerase family. In terms of assembly, homodimer.

Its subcellular location is the cytoplasm. The catalysed reaction is (2S,6S)-2,6-diaminopimelate = meso-2,6-diaminopimelate. It functions in the pathway amino-acid biosynthesis; L-lysine biosynthesis via DAP pathway; DL-2,6-diaminopimelate from LL-2,6-diaminopimelate: step 1/1. Catalyzes the stereoinversion of LL-2,6-diaminopimelate (L,L-DAP) to meso-diaminopimelate (meso-DAP), a precursor of L-lysine and an essential component of the bacterial peptidoglycan. This chain is Diaminopimelate epimerase, found in Gemmatimonas aurantiaca (strain DSM 14586 / JCM 11422 / NBRC 100505 / T-27).